A 185-amino-acid chain; its full sequence is Large ribosomal subunit protein bL25 (185 aa).

This sequence belongs to the bacterial ribosomal protein bL25 family. CTC subfamily. In terms of assembly, part of the 50S ribosomal subunit; part of the 5S rRNA/L5/L18/L25 subcomplex. Contacts the 5S rRNA. Binds to the 5S rRNA independently of L5 and L18.

Its function is as follows. This is one of the proteins that binds to the 5S RNA in the ribosome where it forms part of the central protuberance. The polypeptide is Large ribosomal subunit protein bL25 (Laribacter hongkongensis (strain HLHK9)).